A 100-amino-acid polypeptide reads, in one-letter code: Omega-hexatoxin-Asp2b (100 aa).

Residues methionine 1–glycine 23 form the signal peptide. The propeptide occupies methionine 24–glutamate 55. 3 disulfide bridges follow: cysteine 60-cysteine 73, cysteine 66-cysteine 79, and cysteine 72-cysteine 84.

Belongs to the neurotoxin 15 family. 02 (omega-actx) subfamily. As to expression, expressed by the venom gland.

It is found in the secreted. In terms of biological role, potent inhibitor of insect, but not mammalian, voltage-gated calcium channels (Cav). In Atrax sp. (strain Illawarra) (Funnel-web spider), this protein is Omega-hexatoxin-Asp2b.